Consider the following 267-residue polypeptide: Hydroxyethylthiazole kinase (267 aa).

Met46 serves as a coordination point for substrate. ATP is bound by residues Arg122 and Ser168. Gly195 serves as a coordination point for substrate.

It belongs to the Thz kinase family. Mg(2+) serves as cofactor.

The enzyme catalyses 5-(2-hydroxyethyl)-4-methylthiazole + ATP = 4-methyl-5-(2-phosphooxyethyl)-thiazole + ADP + H(+). The protein operates within cofactor biosynthesis; thiamine diphosphate biosynthesis; 4-methyl-5-(2-phosphoethyl)-thiazole from 5-(2-hydroxyethyl)-4-methylthiazole: step 1/1. Its function is as follows. Catalyzes the phosphorylation of the hydroxyl group of 4-methyl-5-beta-hydroxyethylthiazole (THZ). The sequence is that of Hydroxyethylthiazole kinase from Nitratidesulfovibrio vulgaris (strain DSM 19637 / Miyazaki F) (Desulfovibrio vulgaris).